We begin with the raw amino-acid sequence, 420 residues long: UDP-N-acetylglucosamine 1-carboxyvinyltransferase (420 aa).

Residue 22–23 coordinates phosphoenolpyruvate; the sequence is KN. Arginine 94 lines the UDP-N-acetyl-alpha-D-glucosamine pocket. Residue cysteine 118 is the Proton donor of the active site. Position 118 is a 2-(S-cysteinyl)pyruvic acid O-phosphothioketal (cysteine 118). UDP-N-acetyl-alpha-D-glucosamine is bound by residues aspartate 307 and isoleucine 329.

It belongs to the EPSP synthase family. MurA subfamily.

It is found in the cytoplasm. The catalysed reaction is phosphoenolpyruvate + UDP-N-acetyl-alpha-D-glucosamine = UDP-N-acetyl-3-O-(1-carboxyvinyl)-alpha-D-glucosamine + phosphate. It participates in cell wall biogenesis; peptidoglycan biosynthesis. In terms of biological role, cell wall formation. Adds enolpyruvyl to UDP-N-acetylglucosamine. This Gluconacetobacter diazotrophicus (strain ATCC 49037 / DSM 5601 / CCUG 37298 / CIP 103539 / LMG 7603 / PAl5) protein is UDP-N-acetylglucosamine 1-carboxyvinyltransferase.